The chain runs to 621 residues: Glutamine--fructose-6-phosphate aminotransferase [isomerizing] (621 aa).

Cysteine 2 acts as the Nucleophile; for GATase activity in catalysis. The Glutamine amidotransferase type-2 domain occupies 2 to 223 (CGIIGYVGEG…DRELGIISIS (222 aa)). SIS domains are found at residues 289–436 (LHLE…HKFT) and 470–611 (LSKQ…IDKP). Lysine 616 (for Fru-6P isomerization activity) is an active-site residue.

As to quaternary structure, homodimer.

The protein resides in the plastid. The protein localises to the chloroplast. It catalyses the reaction D-fructose 6-phosphate + L-glutamine = D-glucosamine 6-phosphate + L-glutamate. Functionally, catalyzes the first step in hexosamine metabolism, converting fructose-6P into glucosamine-6P using glutamine as a nitrogen source. The polypeptide is Glutamine--fructose-6-phosphate aminotransferase [isomerizing] (Cyanidium caldarium (Red alga)).